The following is a 289-amino-acid chain: Urease accessory protein UreD (289 aa).

This sequence belongs to the UreD family. In terms of assembly, ureD, UreF and UreG form a complex that acts as a GTP-hydrolysis-dependent molecular chaperone, activating the urease apoprotein by helping to assemble the nickel containing metallocenter of UreC. The UreE protein probably delivers the nickel.

Its subcellular location is the cytoplasm. Required for maturation of urease via the functional incorporation of the urease nickel metallocenter. This Xanthobacter autotrophicus (strain ATCC BAA-1158 / Py2) protein is Urease accessory protein UreD.